The following is a 382-amino-acid chain: Queuine tRNA-ribosyltransferase (382 aa).

D93 serves as the catalytic Proton acceptor. Residues D93–F97, D147, Q191, and G218 each bind substrate. Residues G249–D255 are RNA binding. D268 acts as the Nucleophile in catalysis. The RNA binding; important for wobble base 34 recognition stretch occupies residues T273 to R277. Zn(2+) contacts are provided by C306, C308, C311, and H337.

This sequence belongs to the queuine tRNA-ribosyltransferase family. Homodimer. Within each dimer, one monomer is responsible for RNA recognition and catalysis, while the other monomer binds to the replacement base PreQ1. It depends on Zn(2+) as a cofactor.

The catalysed reaction is 7-aminomethyl-7-carbaguanine + guanosine(34) in tRNA = 7-aminomethyl-7-carbaguanosine(34) in tRNA + guanine. It participates in tRNA modification; tRNA-queuosine biosynthesis. Its function is as follows. Catalyzes the base-exchange of a guanine (G) residue with the queuine precursor 7-aminomethyl-7-deazaguanine (PreQ1) at position 34 (anticodon wobble position) in tRNAs with GU(N) anticodons (tRNA-Asp, -Asn, -His and -Tyr). Catalysis occurs through a double-displacement mechanism. The nucleophile active site attacks the C1' of nucleotide 34 to detach the guanine base from the RNA, forming a covalent enzyme-RNA intermediate. The proton acceptor active site deprotonates the incoming PreQ1, allowing a nucleophilic attack on the C1' of the ribose to form the product. After dissociation, two additional enzymatic reactions on the tRNA convert PreQ1 to queuine (Q), resulting in the hypermodified nucleoside queuosine (7-(((4,5-cis-dihydroxy-2-cyclopenten-1-yl)amino)methyl)-7-deazaguanosine). The sequence is that of Queuine tRNA-ribosyltransferase from Actinobacillus pleuropneumoniae serotype 3 (strain JL03).